The chain runs to 449 residues: MSHYDLILRNGNVVCPDGVRKADIAVSDGKIVLIAEEIPGDAKEVIDAAGKHVFPGITDGHVHFNDPGRTEWETISTGSSALAAGGGVAYFDMPLNCSPCTLDAVNFNNKLAVAQKDSLVDYGFWGGLTSANLDKLDELAECGVIGFKAFACHSGIDEFPRMDDYTALVGMEKLAKLGLPLMVHCENAEITKELTELSLANNRTGVRDYFAARPPITEIENVSRMITFAEETGCKLIIAHISTAKAVDLVAQARARGVDVYCETIGHYLYLTGDDVERLGTVAKCSPPIRDGENQLQMWGRLFNDNIAFVSSDHSPCDPKLKNGEFMRVWGGISACQTTLQGLLTHAYHDRKFPLVKIAQLTAQHVNEIFKIKGKGQINLGYDADFALVDLNHEFTLQAEDLFYKHKVSPYVGDRFRGSVSQTILRGTTIYKDGKIVSQPIGKHLRPHQ.

Positions 61, 63, 148, 184, 240, and 313 each coordinate Zn(2+). N6-carboxylysine is present on Lys148.

This sequence belongs to the metallo-dependent hydrolases superfamily. Allantoinase family. In terms of assembly, homotetramer. Zn(2+) serves as cofactor. Carboxylation allows a single lysine to coordinate two zinc ions.

It carries out the reaction (S)-allantoin + H2O = allantoate + H(+). It functions in the pathway nitrogen metabolism; (S)-allantoin degradation; allantoate from (S)-allantoin: step 1/1. Functionally, catalyzes the conversion of allantoin (5-ureidohydantoin) to allantoic acid by hydrolytic cleavage of the five-member hydantoin ring. This chain is Allantoinase, found in Desulfitobacterium hafniense (strain Y51).